We begin with the raw amino-acid sequence, 578 residues long: Isocitrate dehydrogenase kinase/phosphatase (578 aa).

ATP contacts are provided by residues 315–321 and lysine 336; that span reads APGIRGM. Aspartate 371 is an active-site residue.

The protein belongs to the AceK family.

The protein resides in the cytoplasm. It catalyses the reaction L-seryl-[isocitrate dehydrogenase] + ATP = O-phospho-L-seryl-[isocitrate dehydrogenase] + ADP + H(+). In terms of biological role, bifunctional enzyme which can phosphorylate or dephosphorylate isocitrate dehydrogenase (IDH) on a specific serine residue. This is a regulatory mechanism which enables bacteria to bypass the Krebs cycle via the glyoxylate shunt in response to the source of carbon. When bacteria are grown on glucose, IDH is fully active and unphosphorylated, but when grown on acetate or ethanol, the activity of IDH declines drastically concomitant with its phosphorylation. The sequence is that of Isocitrate dehydrogenase kinase/phosphatase from Shigella dysenteriae serotype 1 (strain Sd197).